A 307-amino-acid polypeptide reads, in one-letter code: MVVYKQLDEWIEHLMQCKPLPEENVKELVAKAREVFSNEKNVQPVKMPVTVCGDIHGQFHDMVELFKIGGTCPDTNYLFMGDYVDRGYNSVETVTLLVSLKVRYPERITILRGNHESRQITQVYGFYDECLRKYGNANVWQLFTDLFDFLPLTGLIENEVFCLHGGLSPALDTLDQIRELDRIQEVPHEGPMCDLLWSDPDERLGWGISPRGAGYTFGQDISEQFNVRNSLKLVARAHQLVMEGYNWSHEKNVVTIFSAPNYCYRCGNMAAIMEVAEGMDKGFQQFEPAPRRGAEGEVNRRTPDYFL.

The Mn(2+) site is built by aspartate 54, histidine 56, aspartate 82, and asparagine 114. The active-site Proton donor is histidine 115. Mn(2+) is bound by residues histidine 164 and histidine 238. The disordered stretch occupies residues 286 to 307 (FEPAPRRGAEGEVNRRTPDYFL). Over residues 289-307 (APRRGAEGEVNRRTPDYFL) the composition is skewed to basic and acidic residues.

It belongs to the PPP phosphatase family. PP-2A subfamily. Requires Mn(2+) as cofactor.

The enzyme catalyses O-phospho-L-seryl-[protein] + H2O = L-seryl-[protein] + phosphate. It catalyses the reaction O-phospho-L-threonyl-[protein] + H2O = L-threonyl-[protein] + phosphate. The polypeptide is Serine/threonine-protein phosphatase PP2A-1 catalytic subunit (Acetabularia peniculus (Green alga)).